The sequence spans 216 residues: Phosphatidylserine decarboxylase proenzyme (216 aa).

Ser-185 acts as the Schiff-base intermediate with substrate; via pyruvic acid in catalysis. Position 185 is a pyruvic acid (Ser); by autocatalysis (Ser-185).

It belongs to the phosphatidylserine decarboxylase family. PSD-A subfamily. Heterodimer of a large membrane-associated beta subunit and a small pyruvoyl-containing alpha subunit. Pyruvate serves as cofactor. Post-translationally, is synthesized initially as an inactive proenzyme. Formation of the active enzyme involves a self-maturation process in which the active site pyruvoyl group is generated from an internal serine residue via an autocatalytic post-translational modification. Two non-identical subunits are generated from the proenzyme in this reaction, and the pyruvate is formed at the N-terminus of the alpha chain, which is derived from the carboxyl end of the proenzyme. The post-translation cleavage follows an unusual pathway, termed non-hydrolytic serinolysis, in which the side chain hydroxyl group of the serine supplies its oxygen atom to form the C-terminus of the beta chain, while the remainder of the serine residue undergoes an oxidative deamination to produce ammonia and the pyruvoyl prosthetic group on the alpha chain.

It localises to the cell membrane. The catalysed reaction is a 1,2-diacyl-sn-glycero-3-phospho-L-serine + H(+) = a 1,2-diacyl-sn-glycero-3-phosphoethanolamine + CO2. The protein operates within phospholipid metabolism; phosphatidylethanolamine biosynthesis; phosphatidylethanolamine from CDP-diacylglycerol: step 2/2. Functionally, catalyzes the formation of phosphatidylethanolamine (PtdEtn) from phosphatidylserine (PtdSer). In Nitrosomonas europaea (strain ATCC 19718 / CIP 103999 / KCTC 2705 / NBRC 14298), this protein is Phosphatidylserine decarboxylase proenzyme.